A 493-amino-acid chain; its full sequence is MSEYDIAKNDVTYTKLDTIECDIPINEELSWRINKFVNQLRISYSTLEEFVDNFVYELKKGLEAHRKHPNLWIPHECSFKMLDSCIANIPTGQEKGTYYAIDFGGTNFRAVRASLDGKGKIKRDQETYSLKFTGSYSHEKGLLDKHATASQLFDHFAERIKYIMGEFNDLDNKEVKSVGFTFSFPCTSPSINCSILIDWTKGFETGRATNDPVEGRDVCKLMNDAFVRAAIPAKVCCVLNDAVGTLMSCAYQKGRGTPPCYIGIILGTGSNGCYYEPEWKKYKYAGKIINIEFGNFDKDLPTSPIDLVMDWYSANRSRQLFEKMISGAYLGEIVRRFMVNVLQSACSKKMWISDSFNSESGSVVLNDTSKNFEDSRKVAKAAWDMDFTDEQIYVLRKICEAVYNRSAALARGTIAAIAKRIKIIEHSKFTCGVDGSLFVKNAWYCKRLQEHLKVILADKAENLIIIPADDGSGKGAAITAAVIALNADIPQLP.

The Hexokinase domain maps to 27-481 (EELSWRINKF…SGKGAAITAA (455 aa)). The hexokinase small subdomain stretch occupies residues 91 to 239 (TGQEKGTYYA…AIPAKVCCVL (149 aa)). 102 to 107 (DFGGTN) contacts ATP. The tract at residues 177–203 (SVGFTFSFPCTSPSINCSILIDWTKGF) is glucose-binding. The tract at residues 240 to 470 (NDAVGTLMSC…ENLIIIPADD (231 aa)) is hexokinase large subdomain.

It belongs to the hexokinase family.

The enzyme catalyses a D-hexose + ATP = a D-hexose 6-phosphate + ADP + H(+). It carries out the reaction D-mannose + ATP = D-mannose 6-phosphate + ADP + H(+). The catalysed reaction is D-fructose + ATP = D-fructose 6-phosphate + ADP + H(+). It catalyses the reaction D-glucose + ATP = D-glucose 6-phosphate + ADP + H(+). It functions in the pathway carbohydrate metabolism; hexose metabolism. Its pathway is carbohydrate degradation; glycolysis; D-glyceraldehyde 3-phosphate and glycerone phosphate from D-glucose: step 1/4. In terms of biological role, catalyzes the phosphorylation of various hexoses to hexose 6-phosphate. The sequence is that of Hexokinase (HK) from Plasmodium falciparum.